Consider the following 322-residue polypeptide: Probable transcription factor KAN3 (322 aa).

The segment at Met-1–Glu-35 is disordered. Basic and acidic residues predominate over residues Arg-17 to Glu-35. Residues Gly-161 to Ser-221 enclose the HTH myb-type domain. A DNA-binding region (H-T-H motif) is located at residues Pro-192–Arg-217. Disordered regions lie at residues Thr-222–Arg-244 and Lys-267–Pro-322. Composition is skewed to polar residues over residues Lys-224 to Asn-241 and Leu-299 to Pro-322.

Expressed in developing phloem.

The protein resides in the nucleus. Probable transcription factor that regulates lateral organ polarity. Plays a role in lateral root formation and development. This Arabidopsis thaliana (Mouse-ear cress) protein is Probable transcription factor KAN3 (KAN3).